Reading from the N-terminus, the 429-residue chain is Phosphoribosylamine--glycine ligase (429 aa).

One can recognise an ATP-grasp domain in the interval 109-316 (KDFLARHNIP…LVELCLAACE (208 aa)). Position 135–196 (135–196 (LREKGAPIVI…EEFLDGEEAS (62 aa))) interacts with ATP. The segment at 212-236 (SQDHKRVGDKDTGPNTGGMGAYSPA) is disordered. The segment covering 213 to 223 (QDHKRVGDKDT) has biased composition (basic and acidic residues). Positions 286 and 288 each coordinate Mg(2+).

It belongs to the GARS family. Monomer. The cofactor is Mg(2+). Mn(2+) is required as a cofactor.

The enzyme catalyses 5-phospho-beta-D-ribosylamine + glycine + ATP = N(1)-(5-phospho-beta-D-ribosyl)glycinamide + ADP + phosphate + H(+). The protein operates within purine metabolism; IMP biosynthesis via de novo pathway; N(1)-(5-phospho-D-ribosyl)glycinamide from 5-phospho-alpha-D-ribose 1-diphosphate: step 2/2. The polypeptide is Phosphoribosylamine--glycine ligase (Escherichia coli O6:H1 (strain CFT073 / ATCC 700928 / UPEC)).